Reading from the N-terminus, the 429-residue chain is Adenylosuccinate synthetase (429 aa).

GTP contacts are provided by residues 12–18 and 40–42; these read GDEGKGK and GHT. Residue aspartate 13 is the Proton acceptor of the active site. Mg(2+) contacts are provided by aspartate 13 and glycine 40. Residues 13-16, 38-41, threonine 128, arginine 142, glutamine 223, threonine 238, and arginine 302 contribute to the IMP site; these read DEGK and NAGH. Histidine 41 (proton donor) is an active-site residue. 298-304 contributes to the substrate binding site; that stretch reads VNTGRPR. GTP-binding positions include arginine 304, 330–332, and 412–414; these read KLD and GVG.

This sequence belongs to the adenylosuccinate synthetase family. In terms of assembly, homodimer. The cofactor is Mg(2+).

It localises to the cytoplasm. The enzyme catalyses IMP + L-aspartate + GTP = N(6)-(1,2-dicarboxyethyl)-AMP + GDP + phosphate + 2 H(+). It participates in purine metabolism; AMP biosynthesis via de novo pathway; AMP from IMP: step 1/2. Functionally, plays an important role in the de novo pathway of purine nucleotide biosynthesis. Catalyzes the first committed step in the biosynthesis of AMP from IMP. The protein is Adenylosuccinate synthetase of Renibacterium salmoninarum (strain ATCC 33209 / DSM 20767 / JCM 11484 / NBRC 15589 / NCIMB 2235).